The sequence spans 1497 residues: ABC multidrug transporter C (1497 aa).

Polar residues predominate over residues 1 to 13; that stretch reads MSLLGTINPNINP. The tract at residues 1-21 is disordered; sequence MSLLGTINPNINPERTVAGRG. Asn137 and Asn336 each carry an N-linked (GlcNAc...) asparagine glycan. The ABC transporter 1 domain occupies 158–412; sequence LEVGTLVRRI…FTNMGFECPE (255 aa). Transmembrane regions (helical) follow at residues 523–543, 557–577, 599–621, 632–652, and 665–685; these read LTMSQLIGNFIMALVIGSVFY, ALLFFAVLLNAFSSALEILTL, AIASMLCDMPYKITNAIIFNLTL, GAFFVFLLFSFVTTLTMSMLF, and ALVPAAILILGLVIYTGFTIP. Asn762 carries an N-linked (GlcNAc...) asparagine glycan. A helical membrane pass occupies residues 777-797; sequence GIMFGFMFFFMFTYLTATEYI. A disordered region spans residues 815–843; it reads QPTGSHDVEKSPEVSSAAKTDEASSKEAT. An ABC transporter 2 domain is found at 853 to 1096; it reads FQWKDVCYDI…LASYFERNGA (244 aa). Residue 889 to 896 coordinates ATP; that stretch reads GVSGAGKT. The next 5 helical transmembrane spans lie at 1192–1212, 1226–1246, 1273–1293, 1313–1333, and 1352–1372; these read YIYSKTALCVLTALYIGFSFF, FSIFMLMTIFGNLVQQIMPNF, IIVELPWNTLMAFLIFVCWYY, LMFLLIWSFLLFTSTFAHMMI, and LCLIFCGVLAPPQSLPGFWIF. Asn1411 carries an N-linked (GlcNAc...) asparagine glycan. A helical transmembrane segment spans residues 1464–1484; sequence FGIMWAYIIFNIFAAVFIYWL.

It belongs to the ABC transporter superfamily. ABCG family. PDR (TC 3.A.1.205) subfamily.

The protein resides in the cell membrane. The catalysed reaction is fluconazole(in) + ATP + H2O = fluconazole(out) + ADP + phosphate + H(+). It catalyses the reaction itraconazole(in) + ATP + H2O = itraconazole(out) + ADP + phosphate + H(+). It carries out the reaction voriconazole(in) + ATP + H2O = voriconazole(out) + ADP + phosphate + H(+). Its activity is regulated as follows. The efflux inhibitor FK506 impairs the transport activity. Pleiotropic ABC efflux transporter that shows a strong substrate specificity for the azole class of drugs such as lotrimazole (CLT), fluconazole (FLC), itraconazole (ITC), ketoconazole (KTC), posaconazole (POS), tebuconazole (TEBZ), and voriconazole (VRC). Is also able to transport rhodamine 6G (R-6G), a known substrate for many ABC transporters. Required for normal pathogenesis in a Galleria mellonella (greater wax moth) infection model. This Aspergillus fumigatus (strain ATCC MYA-4609 / CBS 101355 / FGSC A1100 / Af293) (Neosartorya fumigata) protein is ABC multidrug transporter C.